A 287-amino-acid chain; its full sequence is POU domain class 2-associating factor 2 (287 aa).

The 23-residue stretch at 10 to 32 (KRVYQGVRVKHTVKDLLAEKRSR) folds into the OCA domain. Disordered regions lie at residues 24–51 (DLLA…PPFI), 161–199 (TVPD…TQHR), and 247–279 (PKVG…MAWG). Polar residues-rich tracts occupy residues 33–49 (QTSN…SQPP) and 180–199 (LPPS…TQHR).

It belongs to the POU2AF family. Interacts with POU2F3 (via the POU domain) in a DNA-dependent manner; this interaction recruits POU2AF2 to chromatin and increases POU2F3 transactivation activity. In terms of tissue distribution, expressed in tuft cells of the small intestine, trachea, thymus, and colon.

The protein localises to the cytoplasm. It is found in the cytosol. The protein resides in the nucleus. In terms of biological role, transcriptional coactivator of POU2F3. This complex drives the development of tuft cells, a rare chemosensory cells that coordinate immune and neural functions within mucosal epithelial tissues. The polypeptide is POU domain class 2-associating factor 2 (Mus musculus (Mouse)).